The following is a 313-amino-acid chain: D-alanine--D-alanine ligase (313 aa).

One can recognise an ATP-grasp domain in the interval 108 to 308; that stretch reads KLVWQQTGVP…YSELVVKVLS (201 aa). 138–193 serves as a coordination point for ATP; sequence VAKLGLPLFVKPASEGSSVAVLKVKTADALPAALEEAATHDKIVIVEKSIEGGGEY. Mg(2+) is bound by residues Asp-262, Glu-275, and Asn-277.

Belongs to the D-alanine--D-alanine ligase family. The cofactor is Mg(2+). Mn(2+) is required as a cofactor.

Its subcellular location is the cytoplasm. The catalysed reaction is 2 D-alanine + ATP = D-alanyl-D-alanine + ADP + phosphate + H(+). Its pathway is cell wall biogenesis; peptidoglycan biosynthesis. Functionally, cell wall formation. The polypeptide is D-alanine--D-alanine ligase (Burkholderia cenocepacia (strain ATCC BAA-245 / DSM 16553 / LMG 16656 / NCTC 13227 / J2315 / CF5610) (Burkholderia cepacia (strain J2315))).